Reading from the N-terminus, the 214-residue chain is GTP-binding nuclear protein GSP1/Ran (214 aa).

A Small GTPase Ran-type domain is found at Glu4–Asn168. Asp15–Thr22 lines the GTP pocket. The segment at Asn34–Val42 is switch-I. Residues Gly65, Asn119–Asp122, and Ser147–Lys149 each bind GTP. The tract at residues Gly65–Gln81 is switch-II.

Belongs to the small GTPase superfamily. Ran family. In terms of assembly, found in a nuclear export complex with RanGTP, exportin and pre-miRNA.

The protein localises to the nucleus. GTP-binding protein involved in nucleocytoplasmic transport. Required for the import of protein into the nucleus and also for RNA export. Involved in chromatin condensation and control of cell cycle. This is GTP-binding nuclear protein GSP1/Ran (GSP1) from Yarrowia lipolytica (strain CLIB 122 / E 150) (Yeast).